The primary structure comprises 90 residues: Small ribosomal subunit protein bS18 (90 aa).

Belongs to the bacterial ribosomal protein bS18 family. As to quaternary structure, part of the 30S ribosomal subunit. Forms a tight heterodimer with protein bS6.

In terms of biological role, binds as a heterodimer with protein bS6 to the central domain of the 16S rRNA, where it helps stabilize the platform of the 30S subunit. In Polynucleobacter asymbioticus (strain DSM 18221 / CIP 109841 / QLW-P1DMWA-1) (Polynucleobacter necessarius subsp. asymbioticus), this protein is Small ribosomal subunit protein bS18.